The following is a 164-amino-acid chain: Probable ribosome biogenesis protein RLP24 (164 aa).

It belongs to the eukaryotic ribosomal protein eL24 family. In terms of assembly, associated with nucleolar and cytoplasmic pre-60S particles. At the end of biogenesis it dissociates from cytoplasmic pre-60S particles and is likely to be exchanged for its ribosomal homolog, RPL24.

The protein resides in the cytoplasm. Its subcellular location is the nucleus. Its function is as follows. Involved in the biogenesis of the 60S ribosomal subunit. Ensures the docking of nog1 to pre-60S particles. Activates and recruits ATPase AFG2 to cytoplasmic pre-60S ribosomal particles. This chain is Probable ribosome biogenesis protein RLP24 (rlp24), found in Dictyostelium discoideum (Social amoeba).